A 388-amino-acid polypeptide reads, in one-letter code: Succinate--CoA ligase [ADP-forming] subunit beta (388 aa).

Positions 9–244 constitute an ATP-grasp domain; that stretch reads KEILRKYGVT…LDEEDPAEIE (236 aa). Residues K46, 53–55, E99, A102, and E107 each bind ATP; that span reads GRG. Mg(2+) is bound by residues N199 and D213. Substrate is bound by residues N264 and 321–323; that span reads GIM.

It belongs to the succinate/malate CoA ligase beta subunit family. Heterotetramer of two alpha and two beta subunits. Mg(2+) is required as a cofactor.

The enzyme catalyses succinate + ATP + CoA = succinyl-CoA + ADP + phosphate. It carries out the reaction GTP + succinate + CoA = succinyl-CoA + GDP + phosphate. It functions in the pathway carbohydrate metabolism; tricarboxylic acid cycle; succinate from succinyl-CoA (ligase route): step 1/1. Its function is as follows. Succinyl-CoA synthetase functions in the citric acid cycle (TCA), coupling the hydrolysis of succinyl-CoA to the synthesis of either ATP or GTP and thus represents the only step of substrate-level phosphorylation in the TCA. The beta subunit provides nucleotide specificity of the enzyme and binds the substrate succinate, while the binding sites for coenzyme A and phosphate are found in the alpha subunit. The protein is Succinate--CoA ligase [ADP-forming] subunit beta of Herminiimonas arsenicoxydans.